The sequence spans 253 residues: N-acetylmuramoyl-L-alanine amidase CwlM (253 aa).

The 169-residue stretch at isoleucine 4 to alanine 172 folds into the MurNAc-LAA domain. The SPOR domain occupies lysine 179 to glutamate 253. 2 tandem repeats follow at residues leucine 184–serine 219 and leucine 220–glutamate 253. A 2 X 35 AA approximate tandem repeats region spans residues leucine 184–glutamate 253.

It belongs to the N-acetylmuramoyl-L-alanine amidase 3 family.

The protein localises to the secreted. It carries out the reaction Hydrolyzes the link between N-acetylmuramoyl residues and L-amino acid residues in certain cell-wall glycopeptides.. Hydrolyzes the cell wall of M.luteus more efficiently than that of B.licheniformis and B.subtilis. The C-terminal region, including the repeats, determines substrate specificity. This Bacillus licheniformis protein is N-acetylmuramoyl-L-alanine amidase CwlM (cwlM).